We begin with the raw amino-acid sequence, 121 residues long: Large ribosomal subunit protein bL12 (121 aa).

The protein belongs to the bacterial ribosomal protein bL12 family. In terms of assembly, homodimer. Part of the ribosomal stalk of the 50S ribosomal subunit. Forms a multimeric L10(L12)X complex, where L10 forms an elongated spine to which 2 to 4 L12 dimers bind in a sequential fashion. Binds GTP-bound translation factors.

Functionally, forms part of the ribosomal stalk which helps the ribosome interact with GTP-bound translation factors. Is thus essential for accurate translation. This Shewanella frigidimarina (strain NCIMB 400) protein is Large ribosomal subunit protein bL12.